Here is a 637-residue protein sequence, read N- to C-terminus: Phosphomethylpyrimidine synthase (637 aa).

Residues asparagine 242, methionine 271, tyrosine 300, histidine 336, 356–358 (SRG), 397–400 (DGLR), and glutamate 436 contribute to the substrate site. Histidine 440 provides a ligand contact to Zn(2+). Residue tyrosine 463 participates in substrate binding. Histidine 504 is a Zn(2+) binding site. Cysteine 584, cysteine 587, and cysteine 592 together coordinate [4Fe-4S] cluster.

It belongs to the ThiC family. Homodimer. It depends on [4Fe-4S] cluster as a cofactor.

The enzyme catalyses 5-amino-1-(5-phospho-beta-D-ribosyl)imidazole + S-adenosyl-L-methionine = 4-amino-2-methyl-5-(phosphooxymethyl)pyrimidine + CO + 5'-deoxyadenosine + formate + L-methionine + 3 H(+). It functions in the pathway cofactor biosynthesis; thiamine diphosphate biosynthesis. Functionally, catalyzes the synthesis of the hydroxymethylpyrimidine phosphate (HMP-P) moiety of thiamine from aminoimidazole ribotide (AIR) in a radical S-adenosyl-L-methionine (SAM)-dependent reaction. In Herminiimonas arsenicoxydans, this protein is Phosphomethylpyrimidine synthase.